The sequence spans 154 residues: Jupiter microtubule associated homolog 1 (154 aa).

M1 is subject to N-acetylmethionine. Residues 1-19 (MTTTTTFKGVDPNSRNSSR) are compositionally biased toward polar residues. The interval 1-154 (MTTTTTFKGV…PGGKSSLVLG (154 aa)) is disordered. The residue at position 2 (T2) is an N-acetylthreonine; in Hematological and neurological expressed 1 protein, N-terminally processed. Phosphoserine occurs at positions 28 and 31. T54 is modified (phosphothreonine). A phosphoserine mark is found at S71, S87, S88, and S92. The segment covering 79–91 (SPGTQRSNSSEAS) has biased composition (polar residues). Over residues 96 to 108 (LDLKGEGDMHENV) the composition is skewed to basic and acidic residues. Positions 125-138 (PAAPVPSPVAPAPV) are enriched in pro residues. A Phosphoserine modification is found at S131. Residue K148 is modified to N6-acetyllysine.

Belongs to the JUPITER family. Interacts with the complex composed, at least, of APC, CTNNB1 and GSK3B; the interaction takes place with the inactive form of GSK3B (phosphorylated at 'Ser-9'). As to expression, expressed in yolk sac, fetal brain, brain, spleen and bone marrow.

Its subcellular location is the nucleus. The protein localises to the cytoplasm. Functionally, modulates negatively AKT-mediated GSK3B signaling. Induces CTNNB1 'Ser-33' phosphorylation and degradation through the suppression of the inhibitory 'Ser-9' phosphorylation of GSK3B, which represses the function of the APC:CTNNB1:GSK3B complex and the interaction with CDH1/E-cadherin in adherent junctions. Plays a role in the regulation of cell cycle and cell adhesion. Has an inhibitory role on AR-signaling pathway through the induction of receptor proteasomal degradation. In Mus musculus (Mouse), this protein is Jupiter microtubule associated homolog 1.